The sequence spans 492 residues: Sestrin-1 (492 aa).

The interval 71–252 (FADSFAALGR…ICDITNGNHS (182 aa)) is N-terminal domain; may mediate the alkylhydroperoxide reductase activity. Residue C130 is the Cysteine sulfenic acid (-SOH) intermediate of the active site. S293 and S314 each carry phosphoserine. The segment at 321 to 492 (PARDVSRHFE…ALRAITRYMT (172 aa)) is C-terminal domain; mediates TORC1 regulation. L-leucine contacts are provided by residues 386 to 389 (TYNT), T398, and E463.

The protein belongs to the sestrin family. As to quaternary structure, interacts with the GATOR2 complex which is composed of MIOS, SEC13, SEH1L, WDR24 and WDR59; the interaction is negatively regulated by leucine. Interacts with RRAGA, RRAGB, RRAGC and RRAGD; may function as a guanine nucleotide dissociation inhibitor for RRAGs and regulate them. Interacts with KEAP1, RBX1 and SQSTM1; in the SQSTM1-dependent autophagic degradation of KEAP1. May interact with PRDX1. As to expression, highly expressed in heart and also detected in liver and skeletal muscles (at protein level).

Its subcellular location is the nucleus. It localises to the cytoplasm. The enzyme catalyses a hydroperoxide + L-cysteinyl-[protein] = S-hydroxy-L-cysteinyl-[protein] + an alcohol. Functionally, functions as an intracellular leucine sensor that negatively regulates the TORC1 signaling pathway through the GATOR complex. In absence of leucine, binds the GATOR subcomplex GATOR2 and prevents TORC1 signaling. Binding of leucine to SESN2 disrupts its interaction with GATOR2 thereby activating the TORC1 signaling pathway. This stress-inducible metabolic regulator may also play a role in protection against oxidative and genotoxic stresses. May positively regulate the transcription by NFE2L2 of genes involved in the response to oxidative stress by facilitating the SQSTM1-mediated autophagic degradation of KEAP1. Moreover, may prevent the accumulation of reactive oxygen species (ROS) through the alkylhydroperoxide reductase activity born by the N-terminal domain of the protein. Was originally reported to contribute to oxidative stress resistance by reducing PRDX1. However, this could not be confirmed. The polypeptide is Sestrin-1 (Mus musculus (Mouse)).